We begin with the raw amino-acid sequence, 526 residues long: Glucomannan 4-beta-mannosyltransferase 1 (526 aa).

The chain crosses the membrane as a helical span at residues 31 to 51 (VIIPLLKLAVIVCSVMSIMLF). Residue D130 is part of the active site. 2 residues coordinate substrate: D189 and D191. The active site involves D283. The next 4 helical transmembrane spans lie at 362–382 (IVAH…CVIV), 399–419 (ITIL…LWIL), 477–497 (PLEI…LLFG), and 501–521 (FFVY…GLVG).

Belongs to the glycosyltransferase 2 family. Plant cellulose synthase-like A subfamily.

It is found in the golgi apparatus membrane. It catalyses the reaction GDP-mannose + (glucomannan)n = GDP + (glucomannan)n+1.. In terms of biological role, possesses 4-beta-mannosyltransferase activity on mannan using GDP-mannose. The beta-1,4-mannan product is the backbone for galactomannan synthesis by galactomannan galactosyltransferase. The galactomannan is a hemicellulosic storage polysaccharide accumulated in the form of secondary wall thickenings in the seed endosperm. In Cyamopsis tetragonoloba (Guar), this protein is Glucomannan 4-beta-mannosyltransferase 1.